A 1756-amino-acid polypeptide reads, in one-letter code: Nucleoporin NUP192 (1756 aa).

The protein belongs to the NUP186/NUP192/NUP205 family. As to quaternary structure, component of the nuclear pore complex (NPC). NPC constitutes the exclusive means of nucleocytoplasmic transport. NPCs allow the passive diffusion of ions and small molecules and the active, nuclear transport receptor-mediated bidirectional transport of macromolecules such as proteins, RNAs, ribonucleoparticles (RNPs), and ribosomal subunits across the nuclear envelope. Due to its 8-fold rotational symmetry, all subunits are present with 8 copies or multiples thereof. Part of a tetrameric NUP192-NUP170-NIC96-NUP53 module.

It is found in the nucleus. The protein resides in the nuclear pore complex. In terms of biological role, functions as a component of the nuclear pore complex (NPC). NPC components, collectively referred to as nucleoporins (NUPs), can play the role of both NPC structural components and of docking or interaction partners for transiently associated nuclear transport factors. NUP192 is located to the NPC core at the nuclear membrane and is essential for de novo assembly of NPCs. The chain is Nucleoporin NUP192 (NUP192) from Chaetomium thermophilum (strain DSM 1495 / CBS 144.50 / IMI 039719) (Thermochaetoides thermophila).